We begin with the raw amino-acid sequence, 1648 residues long: Vitellogenin-6 (1648 aa).

An N-terminal signal peptide occupies residues 1–15 (MRFAVLLALFGLALA). In terms of domain architecture, Vitellogenin spans 26-691 (YRSGREYRYQ…SNDSVLPKEI (666 aa)). Cystine bridges form between cysteine 178-cysteine 203 and cysteine 219-cysteine 222. Asparagine 237, asparagine 371, and asparagine 683 each carry an N-linked (GlcNAc...) asparagine glycan. The segment at 1070-1092 (EKNVEYEQEDKEPKSSQLQSQIR) is disordered. Asparagine 1295 carries an N-linked (GlcNAc...) asparagine glycan. Residues 1346–1514 (PECIVKSKEI…SYLSKDDECE (169 aa)) enclose the VWFD domain. Intrachain disulfides connect cysteine 1348-cysteine 1477 and cysteine 1370-cysteine 1513. N-linked (GlcNAc...) asparagine glycans are attached at residues asparagine 1584 and asparagine 1617.

The precursor protein is probably further processed into vitellin polypeptides VT2 and VT3. Post-translationally, both VT2 and VT3 polypeptides seem to be N-glycosylated.

It is found in the secreted. In terms of biological role, precursor of the egg-yolk proteins that are sources of nutrients during embryonic development. The sequence is that of Vitellogenin-6 (vit-6) from Oscheius tipulae.